Reading from the N-terminus, the 179-residue chain is Laminin-binding fimbrial subunit ElfA (179 aa).

A signal peptide spans 1–21; it reads MKKSVLTAFITVVCATSSVMA.

Belongs to the fimbrial protein family.

It is found in the fimbrium. Its function is as follows. Part of the elfADCG fimbrial operon, which could be required for adherence to host epithelial cells. ElfA is an accessory colonization factor that contributes to adherence of bacteria to human intestinal epithelial cells and to animal intestinal tissue in vitro. Binds specifically to laminin, but not to fibronectin or collagen type IV. The polypeptide is Laminin-binding fimbrial subunit ElfA (elfA) (Escherichia coli O157:H7).